The chain runs to 217 residues: Large ribosomal subunit protein uL1 (217 aa).

Residue Tyr-11 is modified to Phosphotyrosine. N6-acetyllysine is present on residues Lys-91 and Lys-106. Lys-118 is modified (N6-acetyllysine; alternate). Residue Lys-118 forms a Glycyl lysine isopeptide (Lys-Gly) (interchain with G-Cter in SUMO1); alternate linkage. Lys-118 participates in a covalent cross-link: Glycyl lysine isopeptide (Lys-Gly) (interchain with G-Cter in SUMO2); alternate. Lys-161 participates in a covalent cross-link: Glycyl lysine isopeptide (Lys-Gly) (interchain with G-Cter in SUMO2).

Belongs to the universal ribosomal protein uL1 family. Component of the large ribosomal subunit.

It localises to the cytoplasm. Functionally, component of the large ribosomal subunit. The ribosome is a large ribonucleoprotein complex responsible for the synthesis of proteins in the cell. In Oryctolagus cuniculus (Rabbit), this protein is Large ribosomal subunit protein uL1 (RPL10A).